We begin with the raw amino-acid sequence, 481 residues long: Tryptophan--tRNA ligase, cytoplasmic (481 aa).

The WHEP-TRS domain occupies 12–68 (SPLELFNSIATQGELVRSLKAGNAPKDEIDSAVKMLLSLKMSYKAAMGEEYKAGCPP). K158 is modified (N6-succinyllysine). Residues 168–177 (PSSEAMHLGH) carry the 'HIGH' region motif. A 'KMSKS' region motif is present at residues 353-357 (KMSAS). Position 355 is a phosphoserine (S355).

The protein belongs to the class-I aminoacyl-tRNA synthetase family. In terms of assembly, homodimer. Interacts with oxidized form of GAPDH. In terms of processing, proteolytic cleavage generates 2 forms; T1-TrpRS and T2-TrpRS. In terms of tissue distribution, isoform 2 is widely expressed, isoform 1 is found only in embryonic stem cells.

It localises to the cytoplasm. The enzyme catalyses tRNA(Trp) + L-tryptophan + ATP = L-tryptophyl-tRNA(Trp) + AMP + diphosphate + H(+). Functionally, catalyzes the attachment of tryptophan to tRNA(Trp) in a two-step reaction: tryptophan is first activated by ATP to form Trp-AMP and then transferred to the acceptor end of the tRNA(Trp). Could also possess an angiostatic activity. This is Tryptophan--tRNA ligase, cytoplasmic from Mus musculus (Mouse).